The primary structure comprises 271 residues: Replication-associated protein A (271 aa).

A CRESS-DNA virus Rep endonuclease domain is found at 11–114 (LHRNANTFLT…PLAVFERGTF (104 aa)). Positions 18-21 (FLTY) match the RCR-1 motif. A divalent metal cation is bound by residues E52, H60, and H62. Positions 60–62 (HLH) match the RCR-2 motif. The active-site For DNA cleavage activity is the Y100. An RCR-3 motif is present at residues 100-103 (YILK). E104 contributes to the a divalent metal cation binding site. The oligomerization stretch occupies residues 174 to 186 (SANKLFPDIQEEF). The binding to RBR1 stretch occupies residues 197–201 (LLCNE). The transactivation stretch occupies residues 220–229 (MLLQPTCYTV). Positions 244 to 264 (SQQMKDQESRASTSSVQQGQG) are enriched in polar residues. Residues 244-271 (SQQMKDQESRASTSSVQQGQGNLLGPEV) form a disordered region.

This sequence belongs to the geminiviridae Rep protein family. Homooligomer. Interacts with host retinoblastoma-related protein 1 (RBR1), and may thereby deregulate the host cell cycle. Part of the C- and V-complexes which are RepA-Rep-DNA complexes involved in the c-sense and v-sense transcription. Mg(2+) is required as a cofactor. Mn(2+) serves as cofactor.

It is found in the host nucleus. The protein localises to the host cytoplasm. Implicated in enhancement of V-sense gene expression. Acts a an inhibitor of C-sense gene transcription. The polypeptide is Replication-associated protein A (Avena sativa (Oat)).